The sequence spans 152 residues: Snaclec coagulation factor IX/factor X-binding protein subunit A (152 aa).

Positions 1-23 (MGRFIFLSFGLLVVFLSLSGTGA) are cleaved as a signal peptide. 3 disulfide bridges follow: cysteine 25–cysteine 36, cysteine 53–cysteine 150, and cysteine 125–cysteine 142. The region spanning 32-151 (YEGHCYNIFH…CGERNPFVCE (120 aa)) is the C-type lectin domain. Residues serine 64, glutamate 66, and glutamate 70 each contribute to the Ca(2+) site. Glutamate 151 contributes to the Ca(2+) binding site.

The protein belongs to the snaclec family. Heterodimer of subunits A and B; disulfide-linked. As to expression, expressed by the venom gland.

It localises to the secreted. Its function is as follows. Anticoagulant protein which binds to the gamma-carboxyglutamic acid-domain regions of factors IX (F9) and factor X (F10) in the presence of calcium with a 1 to 1 stoichiometry. The sequence is that of Snaclec coagulation factor IX/factor X-binding protein subunit A from Gloydius halys (Chinese water mocassin).